We begin with the raw amino-acid sequence, 518 residues long: Protein nucleotidyltransferase YdiU (518 aa).

The span at 1–10 (MTHLRFDNRL) shows a compositional bias: basic and acidic residues. Positions 1–23 (MTHLRFDNRLRQQLPGDPEEGSR) are disordered. ATP is bound by residues Gly-100, Gly-102, Arg-103, Lys-123, Asp-135, Gly-136, Arg-193, and Arg-200. The active-site Proton acceptor is Asp-270. 2 residues coordinate Mg(2+): Asn-271 and Asp-280. Asp-280 contributes to the ATP binding site.

It belongs to the SELO family. The cofactor is Mg(2+). It depends on Mn(2+) as a cofactor.

It carries out the reaction L-seryl-[protein] + ATP = 3-O-(5'-adenylyl)-L-seryl-[protein] + diphosphate. The catalysed reaction is L-threonyl-[protein] + ATP = 3-O-(5'-adenylyl)-L-threonyl-[protein] + diphosphate. It catalyses the reaction L-tyrosyl-[protein] + ATP = O-(5'-adenylyl)-L-tyrosyl-[protein] + diphosphate. The enzyme catalyses L-histidyl-[protein] + UTP = N(tele)-(5'-uridylyl)-L-histidyl-[protein] + diphosphate. It carries out the reaction L-seryl-[protein] + UTP = O-(5'-uridylyl)-L-seryl-[protein] + diphosphate. The catalysed reaction is L-tyrosyl-[protein] + UTP = O-(5'-uridylyl)-L-tyrosyl-[protein] + diphosphate. Functionally, nucleotidyltransferase involved in the post-translational modification of proteins. It can catalyze the addition of adenosine monophosphate (AMP) or uridine monophosphate (UMP) to a protein, resulting in modifications known as AMPylation and UMPylation. This chain is Protein nucleotidyltransferase YdiU, found in Xanthomonas axonopodis pv. citri (strain 306).